A 153-amino-acid polypeptide reads, in one-letter code: MKVRVVAVGRDRSGLYAPAVDEYAKRLGRYLRFELVEVPEARKLAGTAGAKGEEGATLLAKVGPRERVVVLDERGDELTSVAFAERVRRWMERGQDVALLIGGSDGLAPEVLARADERLAVSRFTLAHRLARLVLVEQLYRAMTILRGEPYHK.

S-adenosyl-L-methionine-binding residues include leucine 71 and glycine 102.

This sequence belongs to the RNA methyltransferase RlmH family. In terms of assembly, homodimer.

The protein localises to the cytoplasm. The catalysed reaction is pseudouridine(1915) in 23S rRNA + S-adenosyl-L-methionine = N(3)-methylpseudouridine(1915) in 23S rRNA + S-adenosyl-L-homocysteine + H(+). Specifically methylates the pseudouridine at position 1915 (m3Psi1915) in 23S rRNA. The protein is Ribosomal RNA large subunit methyltransferase H of Anaeromyxobacter dehalogenans (strain 2CP-1 / ATCC BAA-258).